Reading from the N-terminus, the 643-residue chain is Phosphatidylinositol-3,5-bisphosphate 3-phosphatase MTMR2 (643 aa).

Polar residues-rich tracts occupy residues 1–12 (MEKSSSCESLGS) and 23–40 (DSLS…VHTK). The tract at residues 1 to 56 (MEKSSSCESLGSQPAAARPPSVDSLSSASTSHSENSVHTKSASVVSSDSISTSADN) is disordered. A phosphoserine mark is found at S6 and S9. Residues 41 to 55 (SASVVSSDSISTSAD) are compositionally biased toward low complexity. S58 carries the post-translational modification Phosphoserine. The GRAM domain occupies 68-139 (NKLAEMEEPP…GVINRVEKIG (72 aa)). Positions 205-580 (GWKLYDPLLE…RHLELWVGYY (376 aa)) constitute a Myotubularin phosphatase domain. N330, N355, and I356 together coordinate a 1,2-diacyl-sn-glycero-3-phospho-(1D-myo-inositol-3,5-bisphosphate). The a 1,2-diacyl-sn-glycero-3-phospho-(1D-myo-inositol-3-phosphate) site is built by N330, N355, and I356. C417 serves as the catalytic Phosphocysteine intermediate. Residues S418, D419, G420, W421, D422, R423, R459, and R463 each contribute to the a 1,2-diacyl-sn-glycero-3-phospho-(1D-myo-inositol-3,5-bisphosphate) site. Residues S418, D419, G420, W421, D422, and R423 each coordinate a 1,2-diacyl-sn-glycero-3-phospho-(1D-myo-inositol-3-phosphate). R463 lines the a 1,2-diacyl-sn-glycero-3-phospho-(1D-myo-inositol-3-phosphate) pocket. Residues 593-627 (IHNRYKELLAKRAELQKKVEELQREISNRSTSSSE) adopt a coiled-coil conformation. The segment at 615–643 (QREISNRSTSSSERASSPAQCVTPVQTVV) is disordered. Low complexity predominate over residues 620–631 (NRSTSSSERASS). The segment covering 632 to 643 (PAQCVTPVQTVV) has biased composition (polar residues).

Belongs to the protein-tyrosine phosphatase family. Non-receptor class myotubularin subfamily. Homodimer (via coiled-coil domain). Heterotetramer consisting of one MTMR2 dimer and one SBF2/MTMR13 dimer; specifically in peripheral nerves stabilizes SBF2/MTMR13 at the membranes and increases MTMR2 catalytic activity towards phosphatidylinositol 3,5-bisphosphate and to a lesser extent towards phosphatidylinositol 3-phosphate. Heterodimer with SBF1/MTMR5; acts as an adapter for the phosphatase MTMR2 to regulate MTMR2 catalytic activity and subcellular location. Heterodimer with MTMR12. Post-translationally, phosphorylation at Ser-58 decreases MTMR2 localization to endocytic vesicular structures.

It is found in the cytoplasm. The protein localises to the early endosome membrane. The protein resides in the perinuclear region. Its subcellular location is the cell projection. It localises to the axon. It is found in the endosome membrane. It carries out the reaction a 1,2-diacyl-sn-glycero-3-phospho-(1D-myo-inositol-3,5-bisphosphate) + H2O = a 1,2-diacyl-sn-glycero-3-phospho-(1D-myo-inositol-5-phosphate) + phosphate. It catalyses the reaction a 1,2-diacyl-sn-glycero-3-phospho-(1D-myo-inositol-3-phosphate) + H2O = a 1,2-diacyl-sn-glycero-3-phospho-(1D-myo-inositol) + phosphate. The enzyme catalyses 1,2-dioctanoyl-sn-glycero-3-phospho-(1-D-myo-inositol-3-phosphate) + H2O = 1,2-dioctanoyl-sn-glycero-3-phospho-(1D-myo-inositol) + phosphate. The catalysed reaction is 1,2-dioctanoyl-sn-glycero-3-phospho-(1D-myo-inositol-3,5-bisphosphate) + H2O = 1,2-dioctanoyl-sn-glycero-3-phospho-(1D-myo-inositol-5-phosphate) + phosphate. Functionally, lipid phosphatase that specifically dephosphorylates the D-3 position of phosphatidylinositol 3-phosphate and phosphatidylinositol 3,5-bisphosphate, generating phosphatidylinositol and phosphatidylinositol 5-phosphate. Regulates the level of these phosphoinositides critical for various biological processes including autophagy initiation and autophagosome maturation. This chain is Phosphatidylinositol-3,5-bisphosphate 3-phosphatase MTMR2, found in Homo sapiens (Human).